We begin with the raw amino-acid sequence, 370 residues long: Protein-tyrosine sulfotransferase 1 (370 aa).

The Cytoplasmic portion of the chain corresponds to 1-8 (MVGKLKQN). The helical; Signal-anchor for type II membrane protein transmembrane segment at 9 to 25 (LLLACLVISSVTVFYLG) threads the bilayer. At 26–370 (QHAMECHHRI…KEKPQTEQVE (345 aa)) the chain is on the lumenal side. An N-linked (GlcNAc...) asparagine glycan is attached at Asn60. 79–83 (RSGTT) contacts 3'-phosphoadenylyl sulfate. A disulfide bond links Cys97 and Cys157. Residue Glu100 is the Proton donor/acceptor of the active site. Residues 102 to 106 (RVIPR) form an interaction with peptide substrate region. Residues Arg184, Ser192, and Arg196 each coordinate 3'-phosphoadenylyl sulfate. Residues Cys226 and Cys234 are joined by a disulfide bond. Tyr239 provides a ligand contact to 3'-phosphoadenylyl sulfate. Asn262 carries an N-linked (GlcNAc...) asparagine glycan. 3'-phosphoadenylyl sulfate-binding positions include 286 to 295 (STDQVIKPVN) and Lys301.

It belongs to the protein sulfotransferase family. Homodimer. Can also form heterodimers with TPST2. In terms of processing, N-glycosylated. As to expression, ubiquitous. Detected in heart, brain, placenta, lung, liver, skeletal muscle, kidney and pancreas.

It is found in the golgi apparatus membrane. The enzyme catalyses L-tyrosyl-[protein] + 3'-phosphoadenylyl sulfate = O-sulfo-L-tyrosine-[protein] + adenosine 3',5'-bisphosphate + H(+). Functionally, catalyzes the O-sulfation of tyrosine residues within acidic motifs of polypeptides, using 3'-phosphoadenylyl sulfate (PAPS) as cosubstrate. This Homo sapiens (Human) protein is Protein-tyrosine sulfotransferase 1 (TPST1).